Reading from the N-terminus, the 179-residue chain is Large ribosomal subunit protein uL5 (179 aa).

The protein belongs to the universal ribosomal protein uL5 family. As to quaternary structure, part of the 50S ribosomal subunit; part of the 5S rRNA/L5/L18/L25 subcomplex. Contacts the 5S rRNA and the P site tRNA. Forms a bridge to the 30S subunit in the 70S ribosome.

Functionally, this is one of the proteins that bind and probably mediate the attachment of the 5S RNA into the large ribosomal subunit, where it forms part of the central protuberance. In the 70S ribosome it contacts protein S13 of the 30S subunit (bridge B1b), connecting the 2 subunits; this bridge is implicated in subunit movement. Contacts the P site tRNA; the 5S rRNA and some of its associated proteins might help stabilize positioning of ribosome-bound tRNAs. This chain is Large ribosomal subunit protein uL5, found in Desulfosudis oleivorans (strain DSM 6200 / JCM 39069 / Hxd3) (Desulfococcus oleovorans).